Reading from the N-terminus, the 247-residue chain is NAD(P)H-quinone oxidoreductase subunit K, chloroplastic (247 aa).

Residues cysteine 64, cysteine 65, cysteine 129, and cysteine 160 each contribute to the [4Fe-4S] cluster site.

It belongs to the complex I 20 kDa subunit family. As to quaternary structure, NDH is composed of at least 16 different subunits, 5 of which are encoded in the nucleus. [4Fe-4S] cluster serves as cofactor.

Its subcellular location is the plastid. It is found in the chloroplast thylakoid membrane. The enzyme catalyses a plastoquinone + NADH + (n+1) H(+)(in) = a plastoquinol + NAD(+) + n H(+)(out). It catalyses the reaction a plastoquinone + NADPH + (n+1) H(+)(in) = a plastoquinol + NADP(+) + n H(+)(out). NDH shuttles electrons from NAD(P)H:plastoquinone, via FMN and iron-sulfur (Fe-S) centers, to quinones in the photosynthetic chain and possibly in a chloroplast respiratory chain. The immediate electron acceptor for the enzyme in this species is believed to be plastoquinone. Couples the redox reaction to proton translocation, and thus conserves the redox energy in a proton gradient. This Mesostigma viride (Green alga) protein is NAD(P)H-quinone oxidoreductase subunit K, chloroplastic.